A 260-amino-acid polypeptide reads, in one-letter code: Indole-3-glycerol phosphate synthase (260 aa).

This sequence belongs to the TrpC family.

It carries out the reaction 1-(2-carboxyphenylamino)-1-deoxy-D-ribulose 5-phosphate + H(+) = (1S,2R)-1-C-(indol-3-yl)glycerol 3-phosphate + CO2 + H2O. Its pathway is amino-acid biosynthesis; L-tryptophan biosynthesis; L-tryptophan from chorismate: step 4/5. This is Indole-3-glycerol phosphate synthase from Chloroherpeton thalassium (strain ATCC 35110 / GB-78).